The primary structure comprises 587 residues: ATP-dependent lipid A-core flippase (587 aa).

Transmembrane regions (helical) follow at residues 31–51 (LIVSGVALVFNALADSGLIYL), 68–88 (LKMMAFVVVGMIILRGITNFI), 145–165 (GSLITIVREGAYIISLFAVMF), 166–186 (YTSWELTIVLFIIGPIIAVLI), and 259–279 (VQVIASLALATVLYLATTPLI). In terms of domain architecture, ABC transmembrane type-1 spans 32–315 (IVSGVALVFN…LTAVNAQFQS (284 aa)). In terms of domain architecture, ABC transporter spans 347–583 (LEFKNVSFAY…NGAYKQLHSM (237 aa)). 381-388 (GRSGSGKS) serves as a coordination point for ATP.

The protein belongs to the ABC transporter superfamily. Lipid exporter (TC 3.A.1.106) family. In terms of assembly, homodimer.

It is found in the cell inner membrane. It catalyses the reaction ATP + H2O + lipid A-core oligosaccharideSide 1 = ADP + phosphate + lipid A-core oligosaccharideSide 2.. Involved in lipopolysaccharide (LPS) biosynthesis. Translocates lipid A-core from the inner to the outer leaflet of the inner membrane. Transmembrane domains (TMD) form a pore in the inner membrane and the ATP-binding domain (NBD) is responsible for energy generation. The chain is ATP-dependent lipid A-core flippase from Haemophilus influenzae (strain ATCC 51907 / DSM 11121 / KW20 / Rd).